Consider the following 2812-residue polypeptide: MVPPVWTLLLLVGAALFRKEKPPDQKLVVRSSRDNYVLTQCDFEDDAKPLCDWSQVSADDEDWVRASGPSPTGSTGAPGGYPNGEGSYLHMESNSFHRGGVARLLSPDLWEQGPLCVHFAHHMFGLSWGAQLRLLLLSGEEGRRPDVLWKHWNTQRPSWMLTTVTVPAGFTLPTRLMFEGTRGSTAYLDIALDALSIRRGSCNRVCMMQTCSFDIPNDLCDWTWIPTASGAKWTQKKGSSGKPGVGPDGDFSSPGSGCYMLLDPKNARPGQKAVLLSPVSLSSGCLSFSFHYILRGQSPGAALHIYASVLGSIRKHTLFSGQPGPNWQAVSVNYTAVGRIQFAVVGVFGKTPEPAVAVDATSIAPCGEGFPQCDFEDNAHPFCDWVQTSGDGGHWALGHKNGPVHGMGPAGGFPNAGGHYIYLEADEFSQAGQSVRLVSRPFCAPGDICVEFAYHMYGLGEGTMLELLLGSPAGSPPIPLWKRVGSQRPYWQNTSVTVPSGHQQPMQLIFKGIQGSNTASVVAMGFILINPGTCPVKVLPELPPVSPVSSTGPSETTGLTENPTISTKKPTVSIEKPSVTTEKPTVPKEKPTIPTEKPTISTEKPTIPSEKPNMPSEKPTIPSEKPTILTEKPTIPSEKPTIPSEKPTISTEKPTVPTEEPTTPTEETTTSMEEPVIPTEKPSIPTEKPSIPTEKPTISMEETIISTEKPTISPEKPTIPTEKPTIPTEKSTISPEKPTTPTEKPTIPTEKPTISPEKPTTPTEKPTISPEKLTIPTEKPTIPTEKPTIPTEKPTISTEEPTTPTEETTISTEKPSIPMEKPTLPTEETTTSVEETTISTEKLTIPMEKPTISTEKPTIPTEKPTISPEKLTIPTEKLTIPTEKPTIPIEETTISTEKLTIPTEKPTISPEKPTISTEKPTIPTEKPTIPTEETTISTEKLTIPTEKPTISPEKLTIPTEKPTISTEKPTIPTEKLTIPTEKPTIPTEKPTIPTEKLTALRPPHPSPTATGLAALVMSPHAPSTPMTSVILGTTTTSRSSTERCPPNARYESCACPASCKSPRPSCGPLCREGCVCNPGFLFSDNHCIQASSCNCFYNNDYYEPGAEWFSPNCTEHCRCWPGSRVECQISQCGTHTVCQLKNGQYGCHPYAGTATCLVYGDPHYVTFDGRHFGFMGKCTYILAQPCGNSTDPFFRVTAKNEEQGQEGVSCLSKVYVTLPESTVTLLKGRRTLVGGQQVTLPAIPSKGVFLGASGRFVELQTEFGLRVRWDGDQQLYVTVSSTYSGKLCGLCGNYDGNSDNDHLKLDGSPAGDKEELGNSWQTDQDEDQECQKYQVVNSPSCDSSLQSSMSGPGFCGRLVDTHGPFETCLLHVKAASFFDSCMLDMCGFQGLQHLLCTHMSTMTTTCQDAGHAVKPWREPHFCPMACPPNSKYSLCAKPCPDTCHSGFSGMFCSDRCVEACECNPGFVLSGLECIPRSQCGCLHPAGSYFKVGERWYKPGCKELCVCESNNRIRCQPWRCRAQEFCGQQDGIYGCHAQGAATCTASGDPHYLTFDGALHHFMGTCTYVLTRPCWSRSQDSYFVVSATNENRGGILEVSYIKAVHVTVFDLSISLLRGCKVMLNGHRVALPVWLAQGRVTIRLSSNLVLLYTNFGLQVRYDGSHLVEVTVPSSYGGQLCGLCGNYNNNSLDDNLRPDRKLAGDSMQLGAAWKLPESSEPGCFLVGGKPSSCQENSMADAWNKNCAILINPQGPFSQCHQVVPPQSSFASCVHGQCGTKGDTTALCRSLQAYASLCAQAGQAPAWRNRTFCPMRCPPGSSYSPCSSPCPDTCSSINNPRDCPKALPCAESCECQKGHILSGTSCVPLGQCGCTDPAGSYHPVGERWYTENTCTRLCTCSVHNNITCFQSTCKPNQICWALDGLLHCRASGVGVCQLPGESHYVSFDGSNHSIPDACTLVLVKVCHPAMALPFFKISAKHEKEEGGTEAFRLHEVYIDIYDAQVTLQKGHRVLINSKQVTLPAISQIPGVSVKSSSIYSIVNIKIGVQVKFDGNHLLEIEIPTTYYGKVCGMCGNFNDEEEDELMMPSDEVANSDSEFVNSWKDKDIDPSCQSLLVDEQQIPAEQQENPSGNCRAADLRRAREKCEAALRAPVWAQCASRIDLTPFLVDCANTLCEFGGLYQALCQALQAFGATCQSQGLKPPLWRNSSFCPLECPAYSSYTNCLPSCSPSCWDLDGRCEGAKVPSACAEGCICQPGYVLSEDKCVPRSQCGCKDAHGGSIPLGKSWVSSGCTEKCVCTGGAIQCGDFRCPSGSHCQLTSDNSNSNCVSDKSEQCSVYGDPRYLTFDGFSYRLQGRMTYVLIKTVDVLPEGVEPLLVEGRNKMDPPRSSIFLQEVITTVYGYKVQLQAGLELVVNNQKMAVPYRPNEHLRVTLWGQRLYLVTDFELVVSFGGRKNAVISLPSMYEGLVSGLCGNYDKNRKNDMMLPSGALTQNLNTFGNSWEVKTEDALLRFPRAIPAEEEGQGAELGLRTGLQVSECSPEQLASNSTQACRVLADPQGPFAACHQTVAPEPFQEHCVLDLCSAQDPREQEELRCQVLSGHGVSSRYHISELYDTLPSILCQPGRPRGLRGPLRGRLRQHPRLCLQWHPEPPLADCGCTSNGIYYQLGSSFLTEDCSQRCTCASSRILLCEPFSCRAGEVCTLGNHTQGCFPESPCLQNPCQNDGQCREQGATFTCECEVGYGGGLCMEPRDAPPPRKPASNLVGVLLGLLVPVVVVLLAVTRECIYRTRRKREKTQEGDRLARLVDTDTVLDCAC.

Residues 1 to 17 form the signal peptide; sequence MVPPVWTLLLLVGAALF. Residues 18 to 2757 lie on the Extracellular side of the membrane; the sequence is RKEKPPDQKL…DAPPPRKPAS (2740 aa). MAM domains lie at 39 to 204, 209 to 368, and 371 to 536; these read TQCD…SCNR, QTCS…PCGE, and PQCD…TCPV. The disordered stretch occupies residues 61 to 84; that stretch reads EDWVRASGPSPTGSTGAPGGYPNG. The segment covering 66 to 75 has biased composition (low complexity); sequence ASGPSPTGST. Asparagine 333 and asparagine 493 each carry an N-linked (GlcNAc...) asparagine glycan. Disordered stretches follow at residues 545–884 and 904–929; these read VSPV…PTEK and EKPT…KPTI. Positions 547 to 558 are enriched in low complexity; it reads PVSSTGPSETTG. A compositionally biased stretch (polar residues) spans 559 to 570; sequence LTENPTISTKKP. The interval 573 to 1041 is 66 X heptapeptide repeats (approximate) (mucin-like domain); that stretch reads SIEKPSVTTE…GTTTTSRSST (469 aa). Composition is skewed to low complexity over residues 592–603, 651–675, 713–842, 853–868, and 916–929; these read TIPTEKPTISTE, TEKP…MEEP, SPEK…STEK, STEK…TISP, and STEK…KPTI. The TIL 1 domain maps to 1044–1093; that stretch reads CPPNARYESCACPASCKSPRPSCGPLCREGCVCNPGFLFSDNHCIQASSC. The 46-residue stretch at 1103–1148 folds into the VWFC 1 domain; sequence EPGAEWFSPNCTEHCRCWPGSRVECQISQCGTHTVCQLKNGQYGCH. Asparagine 1112 and asparagine 1188 each carry an N-linked (GlcNAc...) asparagine glycan. A VWFD 1 domain is found at 1154 to 1331; that stretch reads ATCLVYGDPH…TDQDEDQECQ (178 aa). Intrachain disulfides connect cysteine 1156-cysteine 1291 and cysteine 1178-cysteine 1330. Residues 1302-1316 are compositionally biased toward basic and acidic residues; the sequence is HLKLDGSPAGDKEEL. Residues 1302 to 1323 form a disordered region; that stretch reads HLKLDGSPAGDKEELGNSWQTD. Residues 1426 to 1479 form the TIL 2 domain; that stretch reads CPPNSKYSLCAKPCPDTCHSGFSGMFCSDRCVEACECNPGFVLSGLECIPRSQC. In terms of domain architecture, VWFC 2 spans 1480–1535; it reads GCLHPAGSYFKVGERWYKPGCKELCVCESNNRIRCQPWRCRAQEFCGQQDGIYGCH. The region spanning 1540–1720 is the VWFD 2 domain; sequence ATCTASGDPH…LPESSEPGCF (181 aa). Intrachain disulfides connect cysteine 1542–cysteine 1680 and cysteine 1564–cysteine 1719. Asparagine 1685 and asparagine 1804 each carry an N-linked (GlcNAc...) asparagine glycan. Residues 1812–1867 enclose the TIL 3 domain; that stretch reads CPPGSSYSPCSSPCPDTCSSINNPRDCPKALPCAESCECQKGHILSGTSCVPLGQC. In terms of domain architecture, VWFC 3 spans 1868–1924; the sequence is GCTDPAGSYHPVGERWYTENTCTRLCTCSVHNNITCFQSTCKPNQICWALDGLLHCR. 2 N-linked (GlcNAc...) asparagine glycosylation sites follow: asparagine 1900 and asparagine 1946. The VWFD 3 domain maps to 1929-2108; the sequence is GVCQLPGESH…KDKDIDPSCQ (180 aa). Disulfide bonds link cysteine 1931–cysteine 2069 and cysteine 1953–cysteine 2107. Residue asparagine 2203 is glycosylated (N-linked (GlcNAc...) asparagine). Residues 2211 to 2267 enclose the TIL 4 domain; the sequence is CPAYSSYTNCLPSCSPSCWDLDGRCEGAKVPSACAEGCICQPGYVLSEDKCVPRSQC. Positions 2268–2329 constitute a VWFC 4 domain; that stretch reads GCKDAHGGSI…NSNCVSDKSE (62 aa). Positions 2329–2505 constitute a VWFD 4 domain; that stretch reads EQCSVYGDPR…SWEVKTEDAL (177 aa). Cysteine 2331 and cysteine 2468 are joined by a disulfide. N-linked (GlcNAc...) asparagine glycans are attached at residues asparagine 2542 and asparagine 2701. Positions 2652 to 2797 constitute a VWFC 5 domain; that stretch reads CGCTSNGIYY…KREKTQEGDR (146 aa). Residues 2708–2744 enclose the EGF-like domain; it reads PESPCLQNPCQNDGQCREQGATFTCECEVGYGGGLCM. Disulfide bonds link cysteine 2712–cysteine 2723, cysteine 2717–cysteine 2732, and cysteine 2734–cysteine 2743. The chain crosses the membrane as a helical span at residues 2758-2778; that stretch reads NLVGVLLGLLVPVVVVLLAVT. The Cytoplasmic segment spans residues 2779 to 2812; the sequence is RECIYRTRRKREKTQEGDRLARLVDTDTVLDCAC.

Probably forms covalent oligomers. As to expression, in testis, primarily in haploid spermatids.

It is found in the cell membrane. Binds in a species-specific manner to the zona pellucida of the egg. May be involved in gamete recognition and/or signaling. The sequence is that of Zonadhesin (ZAN) from Homo sapiens (Human).